Here is a 178-residue protein sequence, read N- to C-terminus: ATP synthase subunit delta (178 aa).

It belongs to the ATPase delta chain family. F-type ATPases have 2 components, F(1) - the catalytic core - and F(0) - the membrane proton channel. F(1) has five subunits: alpha(3), beta(3), gamma(1), delta(1), epsilon(1). F(0) has three main subunits: a(1), b(2) and c(10-14). The alpha and beta chains form an alternating ring which encloses part of the gamma chain. F(1) is attached to F(0) by a central stalk formed by the gamma and epsilon chains, while a peripheral stalk is formed by the delta and b chains.

The protein localises to the cell membrane. Functionally, f(1)F(0) ATP synthase produces ATP from ADP in the presence of a proton or sodium gradient. F-type ATPases consist of two structural domains, F(1) containing the extramembraneous catalytic core and F(0) containing the membrane proton channel, linked together by a central stalk and a peripheral stalk. During catalysis, ATP synthesis in the catalytic domain of F(1) is coupled via a rotary mechanism of the central stalk subunits to proton translocation. This protein is part of the stalk that links CF(0) to CF(1). It either transmits conformational changes from CF(0) to CF(1) or is implicated in proton conduction. The chain is ATP synthase subunit delta from Streptococcus pyogenes serotype M1.